Consider the following 103-residue polypeptide: Histone H4 (103 aa).

Residues 1 to 14 (MSGRGKGGKGLGKG) are compositionally biased toward gly residues. The tract at residues 1 to 20 (MSGRGKGGKGLGKGGAKRHR) is disordered. The residue at position 2 (S2) is an N-acetylserine. An N6-acetyllysine modification is found at K17. Residues 17–21 (KRHRK) mediate DNA binding. The residue at position 21 (K21) is an N6-methyllysine.

This sequence belongs to the histone H4 family. In terms of assembly, the nucleosome is a histone octamer containing two molecules each of H2A, H2B, H3 and H4 assembled in one H3-H4 heterotetramer and two H2A-H2B heterodimers. The octamer wraps approximately 147 bp of DNA.

It localises to the nucleus. The protein resides in the chromosome. In terms of biological role, core component of nucleosome. Nucleosomes wrap and compact DNA into chromatin, limiting DNA accessibility to the cellular machineries which require DNA as a template. Histones thereby play a central role in transcription regulation, DNA repair, DNA replication and chromosomal stability. DNA accessibility is regulated via a complex set of post-translational modifications of histones, also called histone code, and nucleosome remodeling. This chain is Histone H4, found in Pyrenomonas salina.